The chain runs to 343 residues: Sorbitol dehydrogenase (343 aa).

Residues 1 to 26 are disordered; it reads MKALVKTQHGTGHFAVQEKPEPTPGK. Zn(2+) is bound by residues Cys-39, His-60, and Glu-61. Residue Glu-146 participates in substrate binding. NAD(+) contacts are provided by residues Ile-174, Arg-200, and 262 to 264; that span reads VGL.

The protein belongs to the zinc-containing alcohol dehydrogenase family. As to quaternary structure, homotetramer. Requires Zn(2+) as cofactor.

It carries out the reaction keto-D-fructose + NADH + H(+) = D-sorbitol + NAD(+). The catalysed reaction is xylitol + NAD(+) = D-xylulose + NADH + H(+). The enzyme catalyses L-iditol + NAD(+) = keto-L-sorbose + NADH + H(+). Polyol dehydrogenase that catalyzes the NAD(+)-dependent oxidation of various sugar alcohols. Is active with D-sorbitol (D-glucitol), xylitol and L-iditol as substrates, leading to the C2-oxidized products D-fructose, D-xylulose and L-sorbose, respectively. The chain is Sorbitol dehydrogenase (gutB) from Halalkalibacterium halodurans (strain ATCC BAA-125 / DSM 18197 / FERM 7344 / JCM 9153 / C-125) (Bacillus halodurans).